A 119-amino-acid chain; its full sequence is UPF0102 protein Nmul_A0195 (119 aa).

The protein belongs to the UPF0102 family.

In Nitrosospira multiformis (strain ATCC 25196 / NCIMB 11849 / C 71), this protein is UPF0102 protein Nmul_A0195.